The sequence spans 344 residues: Anthranilate phosphoribosyltransferase (344 aa).

Residues Gly80, 83 to 84 (GD), Thr88, 90 to 93 (NIST), 108 to 116 (KHGNRSVSS), and Ser120 contribute to the 5-phospho-alpha-D-ribose 1-diphosphate site. Residue Gly80 coordinates anthranilate. Ser92 is a binding site for Mg(2+). Asn111 provides a ligand contact to anthranilate. Arg166 provides a ligand contact to anthranilate. Mg(2+)-binding residues include Asp225 and Glu226.

The protein belongs to the anthranilate phosphoribosyltransferase family. Homodimer. Mg(2+) serves as cofactor.

The catalysed reaction is N-(5-phospho-beta-D-ribosyl)anthranilate + diphosphate = 5-phospho-alpha-D-ribose 1-diphosphate + anthranilate. It functions in the pathway amino-acid biosynthesis; L-tryptophan biosynthesis; L-tryptophan from chorismate: step 2/5. In terms of biological role, catalyzes the transfer of the phosphoribosyl group of 5-phosphorylribose-1-pyrophosphate (PRPP) to anthranilate to yield N-(5'-phosphoribosyl)-anthranilate (PRA). In Petrotoga mobilis (strain DSM 10674 / SJ95), this protein is Anthranilate phosphoribosyltransferase.